A 60-amino-acid polypeptide reads, in one-letter code: Large ribosomal subunit protein bL32 (60 aa).

The protein belongs to the bacterial ribosomal protein bL32 family.

The chain is Large ribosomal subunit protein bL32 from Petrotoga mobilis (strain DSM 10674 / SJ95).